A 673-amino-acid chain; its full sequence is MYVNYIGLFAFVQISLTLAYPPGRVEISEIYDFEESSSYKGQDIDTSVLYTLSKRKPALVKRSTDASYAPFNVTCSNDNLLRPASEGLNEGEQSYINKRISKVNSELRSFISKTGLNVDLDKVVNSSDGPRLGIAFSGGGLRAMVNGGGAFNAFDSRFESDSPLSGLLQSAMYISGLSGGSWLVGSVAINNFTNITYLRDNVWNLEHSVFAPHGDNVIENLNYYNDLRKEIDQKKHAGFDCSLTDLWGRALSRKLVDAERGGPGITYSSMRNQSWFQNADYPYPIIVADSRLEEETAIPANTSIFEFTAYEFGTWDNGIKAFIPMEYVGTHLLDGVPPDKSCIHNYDNAGFVMGTSATLFNSFLLDWNENVKKNDTYYDILHAILEDLSKHQDDIAPYPNPYQNYTTSNTSVVNAFEPYDTIDLVDGGEDRENIPLWPLLHPQRFVDVVFAIDSTYNDPYGWPLGSSIVATYERVVTFNANKSVDVRGFPYIPDENTIISLGLNTRPTFFGCDGKNTTAGNHDVDNNTPPLLVYFPNYPWTYYSNISTFTMSMDDKMANGILENAFMSTTQNNNESFAVCLACAIIQRSLERKKLSTPTQCSSCFQEYCWDGTLATSTASVYDPTVMSAATTSRAPSGTTSGTASSTTSSSVASATPTHKHWWDSIFEAKENP.

Residues 1 to 19 (MYVNYIGLFAFVQISLTLA) form the signal peptide. Residues N72, N125, N191, N194, N272, N301, N374, N404, N409, N481, N516, N545, and N574 are each glycosylated (N-linked (GlcNAc...) asparagine). The PLA2c domain maps to 74-615 (TCSNDNLLRP…QEYCWDGTLA (542 aa)). Residues 631–653 (TTSRAPSGTTSGTASSTTSSSVA) are disordered.

Belongs to the lysophospholipase family.

Its subcellular location is the secreted. The catalysed reaction is a 1-acyl-sn-glycero-3-phosphocholine + H2O = sn-glycerol 3-phosphocholine + a fatty acid + H(+). Catalyzes the release of fatty acids from lysophospholipids. In Schizosaccharomyces pombe (strain 972 / ATCC 24843) (Fission yeast), this protein is Probable lysophospholipase 4 (plb4).